A 437-amino-acid polypeptide reads, in one-letter code: UDP-N-acetylmuramate--L-alanine ligase (437 aa).

114 to 120 (GTHGKTS) provides a ligand contact to ATP.

Belongs to the MurCDEF family.

Its subcellular location is the cytoplasm. It catalyses the reaction UDP-N-acetyl-alpha-D-muramate + L-alanine + ATP = UDP-N-acetyl-alpha-D-muramoyl-L-alanine + ADP + phosphate + H(+). It functions in the pathway cell wall biogenesis; peptidoglycan biosynthesis. Functionally, cell wall formation. This is UDP-N-acetylmuramate--L-alanine ligase from Lactobacillus johnsonii (strain CNCM I-12250 / La1 / NCC 533).